The primary structure comprises 214 residues: Thymidylate kinase (214 aa).

11–18 contacts ATP; sequence GPEGAGKT.

Belongs to the thymidylate kinase family.

It carries out the reaction dTMP + ATP = dTDP + ADP. In terms of biological role, phosphorylation of dTMP to form dTDP in both de novo and salvage pathways of dTTP synthesis. The polypeptide is Thymidylate kinase (Leuconostoc citreum (strain KM20)).